Consider the following 527-residue polypeptide: L-amino-acid oxidase (527 aa).

The N-terminal stretch at 1 to 27 (MDLHRAPWKSSAAAAVLLLALFSGAAA) is a signal peptide. A disulfide bond links Cys37 and Cys200. Asn58 carries an N-linked (GlcNAc...) asparagine glycan. FAD is bound by residues 70–71 (VA), 90–91 (EA), Arg98, 114–117 (GAMR), and Val288. Arg117 contributes to the substrate binding site. Asn393 carries an N-linked (GlcNAc...) asparagine glycan. A substrate-binding site is contributed by Tyr403. FAD contacts are provided by residues Glu485 and 492–497 (AWMESA). 492–493 (AW) lines the substrate pocket.

As to quaternary structure, homodimer. The cofactor is FAD. Expression mainly observed in plasma, spleen, kidney and gills with low levels detected in blood and no expression detected in brain, liver, heart, muscle or intestine (at protein level).

The protein localises to the secreted. The enzyme catalyses an L-alpha-amino acid + O2 + H2O = a 2-oxocarboxylate + H2O2 + NH4(+). In terms of biological role, inhibits the growth of both Gram-negative and Gram-positive bacteria. Displays strong antibacterial activity towards V.cholerae and E.tarda. Causes deformation of the surface of S.aureus and the formation of pores on the surface of E.coli. Strong antiparasitic activity is seen towards C.irritans, T.brucei and I.multifiliis. Cilia of treated theronts are lost and the macronucleus swells, inducing cell membrane rupture and efflux of the cytoplasm. This Siganus canaliculatus (White-spotted spinefoot) protein is L-amino-acid oxidase.